The following is a 142-amino-acid chain: Hemoglobin subunit alpha (142 aa).

In terms of domain architecture, Globin spans 2–142 (VLSPTDKSNV…VSTVLTSKYR (141 aa)). Residue serine 4 is modified to Phosphoserine. N6-succinyllysine occurs at positions 8 and 12. Lysine 17 carries the N6-acetyllysine; alternate modification. Lysine 17 carries the N6-succinyllysine; alternate modification. Tyrosine 25 carries the post-translational modification Phosphotyrosine. Lysine 41 bears the N6-succinyllysine mark. Histidine 59 serves as a coordination point for O2. Position 88 (histidine 88) interacts with heme b. Serine 103 is modified (phosphoserine). Threonine 109 bears the Phosphothreonine mark. Phosphoserine occurs at positions 125 and 132. Residues threonine 135 and threonine 138 each carry the phosphothreonine modification. The residue at position 139 (serine 139) is a Phosphoserine.

The protein belongs to the globin family. In terms of assembly, heterotetramer of two alpha chains and two beta chains. In terms of tissue distribution, red blood cells.

Involved in oxygen transport from the lung to the various peripheral tissues. Functionally, hemopressin acts as an antagonist peptide of the cannabinoid receptor CNR1. Hemopressin-binding efficiently blocks cannabinoid receptor CNR1 and subsequent signaling. The chain is Hemoglobin subunit alpha (HBA) from Balaenoptera acutorostrata (Common minke whale).